The primary structure comprises 218 residues: 23 kDa integral membrane protein (218 aa).

Residues 1 to 12 are Cytoplasmic-facing; that stretch reads MATLGTGMRCLK. Residues 13–36 form a helical membrane-spanning segment; sequence SCVFILNIICLLCSLVLIGAGAYV. Residues 37–55 lie on the Extracellular side of the membrane; the sequence is EVKFSQYEANLHKVWQAAP. A helical transmembrane segment spans residues 56–71; sequence IAIIVVGVVILIVSFL. At 72 to 82 the chain is on the cytoplasmic side; the sequence is GCCGAIKENVC. The helical transmembrane segment at 83–108 threads the bilayer; it reads MLYMYAFFLIVLLIAELVAAIVAVVY. Topologically, residues 109-183 are extracellular; that stretch reads KDKIDDEINT…SVFSAFLKRN (75 aa). Residues 184 to 205 form a helical membrane-spanning segment; that stretch reads LIIVACVAFGVCFFQLLSIVIA. The Cytoplasmic portion of the chain corresponds to 206–218; it reads CCLGQRIHDYQNV.

The protein belongs to the tetraspanin (TM4SF) family.

It localises to the membrane. The protein is 23 kDa integral membrane protein of Schistosoma japonicum (Blood fluke).